The following is a 254-amino-acid chain: Gamma-glutamyl-gamma-aminobutyrate hydrolase PuuD (254 aa).

The 235-residue stretch at 16–250 folds into the Glutamine amidotransferase type-1 domain; it reads RNRLKGHATQ…ITACQHHIAE (235 aa). C114 acts as the Nucleophile in catalysis. Active-site residues include H222 and E224.

Belongs to the peptidase C26 family. As to quaternary structure, homodimer.

It catalyses the reaction 4-(gamma-L-glutamylamino)butanoate + H2O = 4-aminobutanoate + L-glutamate. The protein operates within amine and polyamine degradation; putrescine degradation; 4-aminobutanoate from putrescine: step 4/4. In terms of biological role, involved in the breakdown of putrescine via hydrolysis of the gamma-glutamyl linkage of gamma-glutamyl-gamma-aminobutyrate. This Escherichia coli (strain K12) protein is Gamma-glutamyl-gamma-aminobutyrate hydrolase PuuD (puuD).